A 65-amino-acid polypeptide reads, in one-letter code: Large ribosomal subunit protein bL35 (65 aa).

Over residues 1-10 (MPKMKSKSSA) the composition is skewed to basic residues. The disordered stretch occupies residues 1–21 (MPKMKSKSSAKMRFSVRAGGT).

The protein belongs to the bacterial ribosomal protein bL35 family.

This Polynucleobacter necessarius subsp. necessarius (strain STIR1) protein is Large ribosomal subunit protein bL35.